We begin with the raw amino-acid sequence, 609 residues long: MPDYRSKTSTHGRNMAGARGLWRATGMKDEDFGKPIIAVVNSFTQFVPGHVHLKDLGQLVAAEIQAAGGVAKEFNTIAVDDGIAMGHDGMLYSLPSRDLIADSVEYMVNAHCADAMVCISNCDKITPGMLMAAMRLNIPVVFVSGGPMEAGKVKFRGDEKAIDLVDAMVVAADDSYTDEEVAEFERSACPTCGSCSGMFTANSMNCLTEALGLSLPGNGSIVATHANRKKLFLKAGQLIVELAKRYYEQNDASILPRSIATKAAFKNAMTLDIAMGGSTNTVLHLLAAANEAEVDFTMDDIDELSRRVPVLSKVAPAKQDVHMEDVHRAGGIMAILGELDRANLLDVSVPTVHEKTLKDALDKWDIIRTEDPDVYEFYRSSPGGVPTQVAFSQNRYYSTLDGDREKGVIRNAEHAFSKDGGLAVLYGNIALDGCIVKTAGVDESILKFTGSARVFESQDAAVEAILGNEIKAGDVVVIRYEGPRGGPGMQEMLYPTSYLKSKGLGKDCALVTDGRFSGGSSGLSIGHVSPEAAEGGAIGLVEDGDTIEIDIPNRTIHLNIDDATLAHRRTVQEAKGWHPKEERKRKVSKALKVYAMHTTSAAKGAVRIL.

Residue D81 participates in Mg(2+) binding. C122 is a [2Fe-2S] cluster binding site. D123 and K124 together coordinate Mg(2+). K124 carries the N6-carboxylysine modification. Residue C195 coordinates [2Fe-2S] cluster. Residue E491 participates in Mg(2+) binding. The active-site Proton acceptor is S517.

Belongs to the IlvD/Edd family. Homodimer. [2Fe-2S] cluster serves as cofactor. Mg(2+) is required as a cofactor.

It catalyses the reaction (2R)-2,3-dihydroxy-3-methylbutanoate = 3-methyl-2-oxobutanoate + H2O. It carries out the reaction (2R,3R)-2,3-dihydroxy-3-methylpentanoate = (S)-3-methyl-2-oxopentanoate + H2O. The protein operates within amino-acid biosynthesis; L-isoleucine biosynthesis; L-isoleucine from 2-oxobutanoate: step 3/4. It functions in the pathway amino-acid biosynthesis; L-valine biosynthesis; L-valine from pyruvate: step 3/4. Functions in the biosynthesis of branched-chain amino acids. Catalyzes the dehydration of (2R,3R)-2,3-dihydroxy-3-methylpentanoate (2,3-dihydroxy-3-methylvalerate) into 2-oxo-3-methylpentanoate (2-oxo-3-methylvalerate) and of (2R)-2,3-dihydroxy-3-methylbutanoate (2,3-dihydroxyisovalerate) into 2-oxo-3-methylbutanoate (2-oxoisovalerate), the penultimate precursor to L-isoleucine and L-valine, respectively. The polypeptide is Dihydroxy-acid dehydratase (Acinetobacter baumannii (strain ATCC 17978 / DSM 105126 / CIP 53.77 / LMG 1025 / NCDC KC755 / 5377)).